A 249-amino-acid chain; its full sequence is Probable amino-acid import ATP-binding protein YxeO (249 aa).

An ABC transporter domain is found at 2–239 (ITVKNIRKAF…PKNERTKRFI (238 aa)). Residue 34 to 41 (GPSGSGKS) participates in ATP binding.

The protein belongs to the ABC transporter superfamily. In terms of assembly, the complex is composed of two ATP-binding proteins (YxeO), two transmembrane proteins (YxeN) and a solute-binding protein (YxeM).

The protein localises to the cell membrane. Its function is as follows. Probably part of the ABC transporter complex YxeMNO that could be involved in amino-acid import. May transport S-methylcysteine. Responsible for energy coupling to the transport system. This Bacillus subtilis (strain 168) protein is Probable amino-acid import ATP-binding protein YxeO (yxeO).